A 448-amino-acid polypeptide reads, in one-letter code: Homogentisate 1,2-dioxygenase (448 aa).

Histidine 303 acts as the Proton acceptor in catalysis. Residues histidine 346 and glutamate 352 each contribute to the Fe cation site. The homogentisate site is built by tyrosine 361 and histidine 382. Histidine 382 lines the Fe cation pocket.

It belongs to the homogentisate dioxygenase family. Hexamer; dimer of trimers. Fe cation serves as cofactor.

The enzyme catalyses homogentisate + O2 = 4-maleylacetoacetate + H(+). It participates in amino-acid degradation; L-phenylalanine degradation; acetoacetate and fumarate from L-phenylalanine: step 4/6. Functionally, involved in the catabolism of homogentisate (2,5-dihydroxyphenylacetate or 2,5-OH-PhAc), a central intermediate in the degradation of phenylalanine and tyrosine. Catalyzes the oxidative ring cleavage of the aromatic ring of homogentisate to yield maleylacetoacetate. In Rhodopseudomonas palustris (strain BisB18), this protein is Homogentisate 1,2-dioxygenase.